We begin with the raw amino-acid sequence, 259 residues long: Isoprenyl transferase (259 aa).

Residue Asp-33 is part of the active site. Asp-33 contacts Mg(2+). Residues 34–37, Trp-38, His-51, and 79–81 contribute to the substrate site; these read GNRR and STE. Asn-82 functions as the Proton acceptor in the catalytic mechanism. Substrate-binding positions include Arg-86, Arg-208, and 214 to 216; that span reads RMS. Glu-227 is a Mg(2+) binding site.

Belongs to the UPP synthase family. As to quaternary structure, homodimer. The cofactor is Mg(2+).

In terms of biological role, catalyzes the condensation of isopentenyl diphosphate (IPP) with allylic pyrophosphates generating different type of terpenoids. In Streptomyces fradiae (Streptomyces roseoflavus), this protein is Isoprenyl transferase.